A 175-amino-acid chain; its full sequence is Protein SYM1 (175 aa).

3 helical membrane passes run 55-75, 92-112, and 143-163; these read MALY…AFLA, VACD…SSMA, and VINF…IIAI.

This sequence belongs to the peroxisomal membrane protein PXMP2/4 family.

It localises to the mitochondrion inner membrane. Functionally, may be involved in cellular response to stress. Required to maintain mitochondrial DNA (mtDNA) integrity and stability. This Gibberella zeae (strain ATCC MYA-4620 / CBS 123657 / FGSC 9075 / NRRL 31084 / PH-1) (Wheat head blight fungus) protein is Protein SYM1 (SYM1).